The chain runs to 328 residues: MAIQTLDYRDFQYGGQEQHRTFCHNLCETLSTWGFIKIQNTSIPDAVIDELFSYNKKFFALPEHIKQKARHPAAPNPHRGWSAVGQEQLSRIAGFEKDEETDGFVPEYRESFDQGAADDELFPNRWIDEDDLPGFRKFMENYYEMCYNFHTQLLRAISTGLSLPEDLLLSRHQTDTSELRMNHYPAIACENLKFGMRIGEHSDFGTLTLLLQDSTGGLQVEDQKKLGTFIPVESDSRYEVIVNVGDCLQRWTNRRLRSANHRVHLPEGKNFKSDEVLADRYSVAYFGKPDRNVLVDSFPEFCRGGESKYNDHMNALEYNQTKLLRTYA.

Residues 175–289 (DTSELRMNHY…RYSVAYFGKP (115 aa)) enclose the Fe2OG dioxygenase domain. His201, Asp203, and His261 together coordinate Fe cation. Arg280 is a 2-oxoglutarate binding site.

Belongs to the iron/ascorbate-dependent oxidoreductase family. Requires Fe(2+) as cofactor.

It participates in mycotoxin biosynthesis. In terms of biological role, 2-oxoglutarate-dependent dioxygenase; part of the gene cluster that mediates the biosynthesis of pneumocandins, lipohexapeptides of the echinocandin family that prevent fungal cell wall formation by non-competitive inhibition of beta-1,3-glucan synthase. The 10,12-dimethylmyristoyl side chain is synthesized by the reducing polyketide synthase gloL/GLPKS4. The thioesterase gloN/GLHYD exclusively interacts with gloL/GLPKS4 to maintain turnover of the polyketide side chain. The 10R,12S-dimethylmyristic acid is then transferred to the first thiolation domain of the nonribosomal peptide synthetase gloA/GLNRPS4 by the acyl-AMP ligase gloD/GLligase, followed by its acylation to L-ornithine to trigger elongation of the cyclic hexapeptide. L-ornithine, 4R-hydroxyl-L-proline (generated from L-proline by the dioxygenase gloF/GLOXY2), 3S-hydroxyl-L-homotyrosine (generated by gloG/GLHtyB, gloH/GLHtyA, gloI/GLHtyC, gloJ/GLHtyD and hydroxylated at C-3 by the dioxygenase gloM/GLOXY1), 3R-hydroxyl-L-glutamine (generated from L-glutamine probably by the dioxygenase gloE/GLOXY3) and 3S-hydroxyl-L-proline (generated from L-proline by the dioxygenase gloF/GLOXY2 to yield pneumocandin B0), or 3S-hydroxyl-4S-methyl-L-proline (generated from L-leucine by the dioxygenase gloC/GLOXY4 to yield pneumocandin A0) are sequentially added to the growing chain. The last C domain of gloA/GLNRPS4 is proposed to be responsible for cyclization by condensation to form the peptide bond between L-ornithine and 3S-hydroxyl-4S-methyl-L-proline (for pneumocandin A0) or 3S-hydroxyl-L-proline (for pneumocandin B0). Finally, the subsequent C-4 hydroxylation of 3S-hydroxyl-L-homotyrosine and L-ornithine dihydroxylation at C-4 and C-5 are performed by the cytochrome P450 monooxygenases gloP/GLP450-1 and gloO/GLP450-2, respectively. This Glarea lozoyensis (strain ATCC 20868 / MF5171) protein is 2-oxoglutarate-dependent dioxygenase gloF.